A 458-amino-acid polypeptide reads, in one-letter code: Glutamate--tRNA ligase 2 (458 aa).

The 'HIGH' region signature appears at Pro-20–Asn-30. Residues Gly-251–Arg-255 carry the 'KMSKS' region motif. Lys-254 is an ATP binding site.

This sequence belongs to the class-I aminoacyl-tRNA synthetase family. Glutamate--tRNA ligase type 1 subfamily. As to quaternary structure, monomer.

Its subcellular location is the cytoplasm. The catalysed reaction is tRNA(Glu) + L-glutamate + ATP = L-glutamyl-tRNA(Glu) + AMP + diphosphate. Its function is as follows. Catalyzes the attachment of glutamate to tRNA(Glu) in a two-step reaction: glutamate is first activated by ATP to form Glu-AMP and then transferred to the acceptor end of tRNA(Glu). The protein is Glutamate--tRNA ligase 2 of Xanthobacter autotrophicus (strain ATCC BAA-1158 / Py2).